The chain runs to 194 residues: Peptidyl-tRNA hydrolase (194 aa).

Tyr-17 provides a ligand contact to tRNA. The Proton acceptor role is filled by His-22. The tRNA site is built by Tyr-68, Asn-70, and Asn-116.

The protein belongs to the PTH family. Monomer.

The protein localises to the cytoplasm. It carries out the reaction an N-acyl-L-alpha-aminoacyl-tRNA + H2O = an N-acyl-L-amino acid + a tRNA + H(+). Hydrolyzes ribosome-free peptidyl-tRNAs (with 1 or more amino acids incorporated), which drop off the ribosome during protein synthesis, or as a result of ribosome stalling. In terms of biological role, catalyzes the release of premature peptidyl moieties from peptidyl-tRNA molecules trapped in stalled 50S ribosomal subunits, and thus maintains levels of free tRNAs and 50S ribosomes. The polypeptide is Peptidyl-tRNA hydrolase (Pseudomonas putida (strain ATCC 700007 / DSM 6899 / JCM 31910 / BCRC 17059 / LMG 24140 / F1)).